A 583-amino-acid polypeptide reads, in one-letter code: Thiol:disulfide interchange protein DsbD (583 aa).

Residues 1–20 form the signal peptide; sequence MLKRFIFLLVGITLTLSAHA. Cystine bridges form between Cys123–Cys128 and Cys200–Cys322. 8 helical membrane passes run 185 to 205, 237 to 257, 261 to 281, 302 to 322, 344 to 364, 375 to 395, 405 to 425, and 433 to 453; these read IFWFFLLGIGLAFTPCVLPML, LTYTLLGLVVAAIGLPFQVAL, PVLISLAILFTILAASMFGLF, GGAFGSVFVMGMIAGLVASPC, GLALYLLALGMGIPLILITLF, WLLKVKTAFGFVMLALPVFLL, PLMWSALAMVFVGWLISVIPT, and VRIVLFLTFAVASYPWANLVW. The Thioredoxin domain occupies 440-583; sequence TFAVASYPWA…NQFLNWLNQL (144 aa). A disulfide bond links Cys500 and Cys503.

It belongs to the thioredoxin family. DsbD subfamily.

It localises to the cell inner membrane. The catalysed reaction is [protein]-dithiol + NAD(+) = [protein]-disulfide + NADH + H(+). The enzyme catalyses [protein]-dithiol + NADP(+) = [protein]-disulfide + NADPH + H(+). In terms of biological role, required to facilitate the formation of correct disulfide bonds in some periplasmic proteins and for the assembly of the periplasmic c-type cytochromes. Acts by transferring electrons from cytoplasmic thioredoxin to the periplasm. This transfer involves a cascade of disulfide bond formation and reduction steps. The polypeptide is Thiol:disulfide interchange protein DsbD (Actinobacillus pleuropneumoniae serotype 5b (strain L20)).